The following is a 478-amino-acid chain: Probable cyclin-dependent kinase 9 (478 aa).

Residues 1-17 (MSAQNYHAGLHQSSTQR) show a composition bias toward polar residues. Residues 1–55 (MSAQNYHAGLHQSSTQRPPKRPNTEHAQEPPKRALIGGQTTPSSSGGGQTPNGTN) are disordered. Residues 22–32 (PNTEHAQEPPK) show a composition bias toward basic and acidic residues. A Protein kinase domain is found at 85–413 (YEKLNKIGQG…SDEAEDDIWF (329 aa)). Residues 91–99 (IGQGTFGEV) and Lys114 each bind ATP. The Proton acceptor role is filled by Asp217. The disordered stretch occupies residues 444-478 (HANRGRHQNAQQRPNQQQARPSNAIPAGQYRDTIF). The segment covering 451–464 (QNAQQRPNQQQARP) has biased composition (low complexity).

It belongs to the protein kinase superfamily. CMGC Ser/Thr protein kinase family. CDC2/CDKX subfamily. Associates with cyclin-T (cit-1.1 or cit-1.2) to form P-TEFb.

The protein localises to the nucleus. The catalysed reaction is L-seryl-[protein] + ATP = O-phospho-L-seryl-[protein] + ADP + H(+). It catalyses the reaction L-threonyl-[protein] + ATP = O-phospho-L-threonyl-[protein] + ADP + H(+). The enzyme catalyses [DNA-directed RNA polymerase] + ATP = phospho-[DNA-directed RNA polymerase] + ADP + H(+). Functionally, essential member of the cyclin-dependent kinase pair (CDK9/cyclin-T) complex, also called positive transcription elongation factor B (P-TEFb), which is proposed to facilitate the transition from abortive to production elongation by phosphorylating the CTD (C-terminal domain) of the large subunit of RNA polymerase II (RNAP II) and spt-5. The protein is Probable cyclin-dependent kinase 9 (cdk-9) of Caenorhabditis elegans.